Consider the following 403-residue polypeptide: Vacuole membrane protein 1 homolog (403 aa).

A coiled-coil region spans residues 7 to 33 (IVLSNEKDIQLRIQQLEERKEKRKNVK). 8 consecutive transmembrane segments (helical) span residues 65 to 85 (FLLF…YVPG), 102 to 122 (IWWV…LHTF), 150 to 170 (ANSF…WMIL), 175 to 195 (WAAL…YFVA), 240 to 260 (LIGN…NPLF), 263 to 283 (AGIT…ATFI), 294 to 314 (ACFV…SFIE), and 348 to 368 (VGLA…MSIV).

This sequence belongs to the VMP1 family.

Its subcellular location is the membrane. It localises to the endoplasmic reticulum. The catalysed reaction is a 1,2-diacyl-sn-glycero-3-phospho-L-serine(in) = a 1,2-diacyl-sn-glycero-3-phospho-L-serine(out). It catalyses the reaction cholesterol(in) = cholesterol(out). It carries out the reaction a 1,2-diacyl-sn-glycero-3-phosphocholine(in) = a 1,2-diacyl-sn-glycero-3-phosphocholine(out). The enzyme catalyses a 1,2-diacyl-sn-glycero-3-phosphoethanolamine(in) = a 1,2-diacyl-sn-glycero-3-phosphoethanolamine(out). Its function is as follows. Phospholipid scramblase involved in lipid homeostasis and membrane dynamics processes. Required for autophagosome formation: participates in early stages of autophagosome biogenesis at the endoplasmic reticulum (ER) membrane by reequilibrating the leaflets of the ER as lipids are extracted. In addition to autophagy, involved in other processes in which phospholipid scramblase activity is required. In Dictyostelium discoideum (Social amoeba), this protein is Vacuole membrane protein 1 homolog.